A 643-amino-acid polypeptide reads, in one-letter code: Alpha-dioxygenase PIOX (643 aa).

The Proton acceptor role is filled by His167. Residue Asp168 participates in Ca(2+) binding. His172 is a heme b binding site. Residues Thr220, Trp222, Asp224, and Ser226 each coordinate Ca(2+). Heme b is bound by residues His392, Arg489, and Arg493.

The protein belongs to the peroxidase family. The cofactor is heme b. Ca(2+) is required as a cofactor.

The catalysed reaction is a 1,2-saturated fatty acid + O2 = a (2R)-2-hydroperoxy fatty acid. It carries out the reaction (9Z,12Z,15Z)-octadecatrienoate + O2 = (R)-2-hydroperoxy-(9Z,12Z,15Z)-octadecatrienoate. It catalyses the reaction (9Z,12Z)-octadecadienoate + O2 = (2R,9Z,12Z)-2-hydroperoxyoctadecadienoate. Alpha-dioxygenase that catalyzes the primary oxygenation step of a variety of 14-20 carbon fatty acids, containing up to three unsaturated bonds, into their corresponding 2R-hydroperoxides. Involved in the production of oxylipins that function in cell signaling, wound healing, and protection from infection. The polypeptide is Alpha-dioxygenase PIOX (Nicotiana tabacum (Common tobacco)).